The primary structure comprises 401 residues: Chorismate synthase (401 aa).

Positions 40 and 46 each coordinate NADP(+). FMN is bound by residues 135–137 (RAS), 256–257 (QA), Gly-300, 315–319 (KPIST), and Arg-341.

The protein belongs to the chorismate synthase family. Homotetramer. FMNH2 serves as cofactor.

The catalysed reaction is 5-O-(1-carboxyvinyl)-3-phosphoshikimate = chorismate + phosphate. The protein operates within metabolic intermediate biosynthesis; chorismate biosynthesis; chorismate from D-erythrose 4-phosphate and phosphoenolpyruvate: step 7/7. Catalyzes the anti-1,4-elimination of the C-3 phosphate and the C-6 proR hydrogen from 5-enolpyruvylshikimate-3-phosphate (EPSP) to yield chorismate, which is the branch point compound that serves as the starting substrate for the three terminal pathways of aromatic amino acid biosynthesis. This reaction introduces a second double bond into the aromatic ring system. The protein is Chorismate synthase of Mycobacterium avium (strain 104).